Reading from the N-terminus, the 265-residue chain is Small ribosomal subunit protein uS2 (265 aa).

This sequence belongs to the universal ribosomal protein uS2 family.

This chain is Small ribosomal subunit protein uS2, found in Ligilactobacillus salivarius (strain UCC118) (Lactobacillus salivarius).